The following is a 137-amino-acid chain: Proofreading thioesterase EntH (137 aa).

The Nucleophile or proton acceptor role is filled by Glu63.

This sequence belongs to the thioesterase PaaI family. As to quaternary structure, homotetramer. Dimer of dimers. Interacts specifically with the aryl carrier protein (ArCP) domain of EntB.

It localises to the cytoplasm. Its pathway is siderophore biosynthesis; enterobactin biosynthesis. Required for optimal enterobactin synthesis. Acts as a proofreading enzyme that prevents EntB misacylation by hydrolyzing the thioester bound existing between EntB and wrongly charged molecules. The sequence is that of Proofreading thioesterase EntH from Citrobacter koseri (strain ATCC BAA-895 / CDC 4225-83 / SGSC4696).